We begin with the raw amino-acid sequence, 739 residues long: MPVKMVAIFGASTVLWILFAVSQAFKIEISPEYKTLAQIGDSMLLTCSTTGCESPSFSWRTQIDSPLNGKVKTEGAKSVLTMDPVSFENEHSYLCTATCNSGKLERGIQVDIYSFPKDPEIQFSGPLEVGKPVMVKCLAPDVYPIDRLEIELFKGDRLMKKQDFVDEMAKKSLETKSLEVIFTPVIEDIEKALVCRAKLYIDQTDSIPKERETVRELQVYTSPKNTEISVHPSTRLHEGAAVTMTCASEGLPAPEIFWSKKLDNGVLQLLSGNATLTLIAMRMEDSGIYVCEGVNLVGRDKTEVELIVQEKPFTVDISPGSQVAAQVGDSVVLTCAAVGCDSPSFSWRTQTDSPLNGEVRDEGATSTLTLSPVGVEDEHSYLCTVTCQRRKLEKTIQVEVYSFPEDPEIEISGPLVHGRPVTVNCTVPNVYPFDHLEIELLKGETTLLNKFLREEIGTKSLETKSLEMTFIPTAEDTGKALVCLAKLHSSQMESEPKQRQSTQTLYVNVAPKEPTIWVSPSPVPEEGSPVNLTCSSDGFPTPKILWSRQLKNGELQPLSQNTTLSFMATKMEDSGIYVCEGINEAGISKKSVELIIQGSSKDIQLTVFPSKSVKEGDTVIISCTCGSVPEIWIILKKKAKTGDMVLKSVNGSYTIRKAQLQDAGVYECESKTEVGSQLRSLTLDVKGKENNKDYFSPELLALYFASSLVIPAIGMIIYFARKANMKGSYSLVEAQKSKV.

The N-terminal stretch at 1 to 24 (MPVKMVAIFGASTVLWILFAVSQA) is a signal peptide. Ig-like C2-type domains are found at residues 25–111 (FKIE…IQVD), 119–212 (PEIQ…KERE), 223–309 (PKNT…LIVQ), 312–397 (PFTV…KTIQ), 408–506 (EIEI…QTLY), 514–595 (PTIW…VELI), and 601–682 (KDIQ…RSLT). The Extracellular segment spans residues 25–698 (FKIEISPEYK…ENNKDYFSPE (674 aa)). Cystine bridges form between C47/C95, C52/C99, C137/C195, C246/C291, and C335/C383. The N-linked (GlcNAc...) asparagine glycan is linked to N273. Residues N424, N531, N561, and N650 are each glycosylated (N-linked (GlcNAc...) asparagine). Residues C534 and C579 are joined by a disulfide bond. The chain crosses the membrane as a helical span at residues 699-720 (LLALYFASSLVIPAIGMIIYFA). At 721 to 739 (RKANMKGSYSLVEAQKSKV) the chain is on the cytoplasmic side.

As to quaternary structure, binds to ECMV-D capsid proteins and acts as a receptor for this virus. Cleaved by the metalloproteinase ADAM17 to generate the soluble form. In terms of processing, sialoglycoprotein. Post-translationally, ubiquitinated by TRIM65 via 'Lys-48'-linked ubiquitination; leading to proteasomal degradation. In terms of tissue distribution, expressed in aortic endothelial cells, with low expression in the descending thoracic aorta and the outer curvature of the aortic arch, where pulsatory shear stress exists, and high in the inner curvature of the aortic arch, where oscillatory shear stress prevails (at protein level). Expressed on inflamed vascular endothelium, as well as on macrophage-like and dendritic cell types in both normal and inflamed tissue.

The protein resides in the cell membrane. The protein localises to the secreted. In terms of biological role, cell adhesion glycoprotein predominantly expressed on the surface of endothelial cells that plays an important role in immune surveillance and inflammation. Acts as a major regulator of leukocyte adhesion to the endothelium through interaction with different types of integrins. During inflammatory responses, binds ligands on the surface of activated endothelial cells to initiate the activation of calcium channels and the plasma membrane-associated small GTPase RAC1 leading to leukocyte transendothelial migration. Also serves as a quality-control checkpoint for entry into bone marrow by providing a 'don't-eat-me' stamping in the context of major histocompatibility complex (MHC) class-I presentation. The chain is Vascular cell adhesion protein 1 (Vcam1) from Rattus norvegicus (Rat).